Consider the following 65-residue polypeptide: Light-harvesting protein B800/830/1020 alpha-2 chain (65 aa).

Over 1 to 13 (MWKLWKFVDFRMT) the chain is Cytoplasmic. Residues 14 to 34 (AVGFHIFFALIAFAVHFACIS) traverse the membrane as a helical segment. H29 lines the a bacteriochlorophyll pocket. Residues 35-65 (SERFNWLEGAPAAEYYMDENPGIWKRTSYDG) lie on the Periplasmic side of the membrane.

This sequence belongs to the antenna complex alpha subunit family. The core complex is formed by different alpha and beta chains, binding bacteriochlorophyll molecules, and arranged most probably in tetrameric structures disposed around the reaction center. The non-pigmented gamma chains may constitute additional components.

The protein resides in the cell inner membrane. In terms of biological role, antenna complexes are light-harvesting systems, which transfer the excitation energy to the reaction centers. This is Light-harvesting protein B800/830/1020 alpha-2 chain from Halorhodospira halochloris (Ectothiorhodospira halochloris).